The primary structure comprises 534 residues: Bifunctional pantoate ligase/cytidylate kinase (534 aa).

A pantoate--beta-alanine ligase region spans residues 1 to 302; the sequence is MRLLTTVAAL…LGSTRLIDNT (302 aa). 48–55 contributes to the ATP binding site; it reads MGSLHQGH. His-55 serves as the catalytic Proton donor. Gln-79 contributes to the (R)-pantoate binding site. Position 79 (Gln-79) interacts with beta-alanine. Residue 172–175 coordinates ATP; the sequence is GQKD. (R)-pantoate is bound at residue Gln-178. Residues Val-201 and 209 to 212 contribute to the ATP site; that span reads CSSR. Residues 303–534 form a cytidylate kinase region; it reads ILRDRQPIIA…DYYQQRLSQW (232 aa).

This sequence in the N-terminal section; belongs to the pantothenate synthetase family. The protein in the C-terminal section; belongs to the cytidylate kinase family. Type 1 subfamily.

It localises to the cytoplasm. The enzyme catalyses (R)-pantoate + beta-alanine + ATP = (R)-pantothenate + AMP + diphosphate + H(+). The catalysed reaction is CMP + ATP = CDP + ADP. It carries out the reaction dCMP + ATP = dCDP + ADP. It participates in cofactor biosynthesis; (R)-pantothenate biosynthesis; (R)-pantothenate from (R)-pantoate and beta-alanine: step 1/1. Catalyzes the condensation of pantoate with beta-alanine in an ATP-dependent reaction via a pantoyl-adenylate intermediate. In terms of biological role, catalyzes the transfer of a phosphate group from ATP to either CMP or dCMP to form CDP or dCDP and ADP, respectively. The sequence is that of Bifunctional pantoate ligase/cytidylate kinase from Trichormus variabilis (strain ATCC 29413 / PCC 7937) (Anabaena variabilis).